Here is a 135-residue protein sequence, read N- to C-terminus: Small ribosomal subunit protein bS16 (135 aa).

The disordered stretch occupies residues 82 to 135; that stretch reads RPAETVGKAKQAAKREADAKQAAKEAAEAKAAAADEKAAEAEASDSAESESTEG. The span at 94–121 shows a compositional bias: basic and acidic residues; that stretch reads AKREADAKQAAKEAAEAKAAAADEKAAE. Residues 123-135 are compositionally biased toward acidic residues; that stretch reads EASDSAESESTEG.

Belongs to the bacterial ribosomal protein bS16 family.

The polypeptide is Small ribosomal subunit protein bS16 (Synechococcus sp. (strain CC9605)).